The sequence spans 251 residues: Ditrans,polycis-undecaprenyl-diphosphate synthase ((2E,6E)-farnesyl-diphosphate specific) (251 aa).

Asp-29 is an active-site residue. Asp-29 serves as a coordination point for Mg(2+). Residues 30 to 33 (GNGK), Trp-34, Arg-42, His-46, and 74 to 76 (SSD) contribute to the substrate site. Asn-77 functions as the Proton acceptor in the catalytic mechanism. Residues Trp-78, Arg-80, Arg-197, and 203-205 (RLS) each bind substrate. A Mg(2+)-binding site is contributed by Glu-216.

Belongs to the UPP synthase family. In terms of assembly, homodimer. The cofactor is Mg(2+).

The enzyme catalyses 8 isopentenyl diphosphate + (2E,6E)-farnesyl diphosphate = di-trans,octa-cis-undecaprenyl diphosphate + 8 diphosphate. Catalyzes the sequential condensation of isopentenyl diphosphate (IPP) with (2E,6E)-farnesyl diphosphate (E,E-FPP) to yield (2Z,6Z,10Z,14Z,18Z,22Z,26Z,30Z,34E,38E)-undecaprenyl diphosphate (di-trans,octa-cis-UPP). UPP is the precursor of glycosyl carrier lipid in the biosynthesis of bacterial cell wall polysaccharide components such as peptidoglycan and lipopolysaccharide. The chain is Ditrans,polycis-undecaprenyl-diphosphate synthase ((2E,6E)-farnesyl-diphosphate specific) from Buchnera aphidicola subsp. Baizongia pistaciae (strain Bp).